A 382-amino-acid polypeptide reads, in one-letter code: 4-hydroxy-3-methylbut-2-en-1-yl diphosphate synthase (flavodoxin) (382 aa).

The [4Fe-4S] cluster site is built by cysteine 290, cysteine 293, cysteine 327, and glutamate 334.

This sequence belongs to the IspG family. [4Fe-4S] cluster serves as cofactor.

It carries out the reaction (2E)-4-hydroxy-3-methylbut-2-enyl diphosphate + oxidized [flavodoxin] + H2O + 2 H(+) = 2-C-methyl-D-erythritol 2,4-cyclic diphosphate + reduced [flavodoxin]. The protein operates within isoprenoid biosynthesis; isopentenyl diphosphate biosynthesis via DXP pathway; isopentenyl diphosphate from 1-deoxy-D-xylulose 5-phosphate: step 5/6. In terms of biological role, converts 2C-methyl-D-erythritol 2,4-cyclodiphosphate (ME-2,4cPP) into 1-hydroxy-2-methyl-2-(E)-butenyl 4-diphosphate. This Rhodopirellula baltica (strain DSM 10527 / NCIMB 13988 / SH1) protein is 4-hydroxy-3-methylbut-2-en-1-yl diphosphate synthase (flavodoxin).